Here is a 130-residue protein sequence, read N- to C-terminus: Small ribosomal subunit protein uS8 (130 aa).

Belongs to the universal ribosomal protein uS8 family. Part of the 30S ribosomal subunit.

Its function is as follows. One of the primary rRNA binding proteins, it binds directly to 16S rRNA central domain where it helps coordinate assembly of the platform of the 30S subunit. The sequence is that of Small ribosomal subunit protein uS8 from Methanococcoides burtonii (strain DSM 6242 / NBRC 107633 / OCM 468 / ACE-M).